A 228-amino-acid polypeptide reads, in one-letter code: Superoxide dismutase [Mn], mitochondrial (228 aa).

A mitochondrion-targeting transit peptide spans 1–24 (MALRTLVSRRTLATGLGFRQQLRG). Mn(2+)-binding residues include His-52, His-100, Asp-189, and His-193.

This sequence belongs to the iron/manganese superoxide dismutase family. Homotetramer. Mn(2+) serves as cofactor.

The protein resides in the mitochondrion matrix. It catalyses the reaction 2 superoxide + 2 H(+) = H2O2 + O2. Functionally, destroys superoxide anion radicals which are normally produced within the cells and which are toxic to biological systems. In Nicotiana plumbaginifolia (Leadwort-leaved tobacco), this protein is Superoxide dismutase [Mn], mitochondrial (SODA).